A 331-amino-acid chain; its full sequence is MKKTAVLSTVAFAIALGSASASFAADNRIGVTIYKYDDNFMSLMRKEIDKEAKVVGGIKLLMNDSQNAQSIQNDQVDILLSKGVKALAINLVDPAAAPTIIGKAKSDNIPVVFFNKDPGAKAIGSYEQAYYVGTDPKESGLIQGDLIAKQWKANPALDLNKDGKIQFVLLKGEPGHPDAEVRTKYVIEELNAKGIQTEQLFIDTGMWDAAMAKDKVDAWLSSSKANDIEVIISNNDGMALGALEATKAHGKKLPIFGVDALPEALQLISKGELAGTVLNDSVNQGKAVVQLSNNLAQGKSATEGTKWELKDRVVRIPYVGVDKDNLGDFLK.

The signal sequence occupies residues 1-24 (MKKTAVLSTVAFAIALGSASASFA). Residues aspartate 38 and asparagine 115 each contribute to the beta-D-galactose site. Residues aspartate 38 and asparagine 115 each contribute to the beta-D-glucose site. Ca(2+) contacts are provided by aspartate 158, asparagine 160, aspartate 162, lysine 164, and glutamine 166. Residues histidine 176, aspartate 178, and arginine 182 each contribute to the beta-D-galactose site. The beta-D-glucose site is built by histidine 176, aspartate 178, and arginine 182. Position 229 (glutamate 229) interacts with Ca(2+). 3 residues coordinate beta-D-galactose: asparagine 235, aspartate 259, and asparagine 279. Asparagine 235, aspartate 259, and asparagine 279 together coordinate beta-D-glucose.

This sequence belongs to the bacterial solute-binding protein 2 family. The ABC transporter complex is composed of one ATP-binding protein (MglA), two transmembrane proteins (MglC) and a solute-binding protein (MglB).

It localises to the periplasm. Functionally, part of the ABC transporter complex MglABC involved in galactose/methyl galactoside import. In Haemophilus influenzae (strain ATCC 51907 / DSM 11121 / KW20 / Rd), this protein is D-galactose/methyl-galactoside binding periplasmic protein MglB (mglB).